Consider the following 138-residue polypeptide: Transcription antitermination protein NusB (138 aa).

This sequence belongs to the NusB family.

Its function is as follows. Involved in transcription antitermination. Required for transcription of ribosomal RNA (rRNA) genes. Binds specifically to the boxA antiterminator sequence of the ribosomal RNA (rrn) operons. In Tolumonas auensis (strain DSM 9187 / NBRC 110442 / TA 4), this protein is Transcription antitermination protein NusB.